Here is a 166-residue protein sequence, read N- to C-terminus: Large ribosomal subunit protein uL10 (166 aa).

Belongs to the universal ribosomal protein uL10 family. As to quaternary structure, part of the ribosomal stalk of the 50S ribosomal subunit. The N-terminus interacts with L11 and the large rRNA to form the base of the stalk. The C-terminus forms an elongated spine to which L12 dimers bind in a sequential fashion forming a multimeric L10(L12)X complex.

Its function is as follows. Forms part of the ribosomal stalk, playing a central role in the interaction of the ribosome with GTP-bound translation factors. The chain is Large ribosomal subunit protein uL10 from Bacillus pumilus (strain SAFR-032).